The following is a 944-amino-acid chain: Bifunctional uridylyltransferase/uridylyl-removing enzyme (944 aa).

The uridylyltransferase stretch occupies residues 1–371 (MRDLDFTNIL…RFTHRNRKIA (371 aa)). Residues 372 to 727 (GSVEFVEDRG…VRTDSFHAIT (356 aa)) form a uridylyl-removing region. In terms of domain architecture, HD spans 488-604 (VDEHLIRTVD…TDFADRVQSL (117 aa)). ACT domains follow at residues 728-809 (EITV…EVIA) and 839-918 (VIEV…LRER). Residues 911-944 (EEDELRERMPSGIIAPAATARTPPASEKKAGSPI) form a disordered region. The segment covering 925–935 (APAATARTPPA) has biased composition (low complexity).

It belongs to the GlnD family. It depends on Mg(2+) as a cofactor.

It catalyses the reaction [protein-PII]-L-tyrosine + UTP = [protein-PII]-uridylyl-L-tyrosine + diphosphate. The enzyme catalyses [protein-PII]-uridylyl-L-tyrosine + H2O = [protein-PII]-L-tyrosine + UMP + H(+). Uridylyltransferase (UTase) activity is inhibited by glutamine, while glutamine likely activates uridylyl-removing (UR) activity. In terms of biological role, modifies, by uridylylation and deuridylylation, the PII regulatory proteins GlnB and GlnK, in response to the nitrogen status of the cell that GlnD senses through the glutamine level. Under low glutamine levels, catalyzes the conversion of the PII proteins and UTP to PII-UMP and PPi, while under higher glutamine levels, GlnD likely hydrolyzes PII-UMP to PII and UMP (deuridylylation). Thus, controls uridylylation state and activity of the PII proteins, and plays an important role in the regulation of nitrogen metabolism. In Rhizobium leguminosarum bv. viciae, this protein is Bifunctional uridylyltransferase/uridylyl-removing enzyme.